The primary structure comprises 206 residues: Transmembrane emp24 domain-containing protein bai (206 aa).

The N-terminal stretch at 1-20 (MARAALIVCLLMACAWSSHA) is a signal peptide. Topologically, residues 21–172 (VMFKLSPNTQ…RDTNEKTNSR (152 aa)) are lumenal. The region spanning 30-140 (QKCLKEDIQA…LKPLEVDLKR (111 aa)) is the GOLD domain. The chain crosses the membrane as a helical span at residues 173 to 193 (VLFFSIFSMCCLLGLATWQVL). Residues 194–206 (YLRRYFKAKKLIE) are Cytoplasmic-facing.

Belongs to the EMP24/GP25L family.

It is found in the membrane. Eca and bai are essential, though not redundant, for dorsoventral patterning of the embryo. Specifically required during early embryogenesis for the activity of maternal tkv, while the zygotic tkv is not affected. The sequence is that of Transmembrane emp24 domain-containing protein bai from Drosophila erecta (Fruit fly).